The chain runs to 282 residues: Bifunctional protein FolD (282 aa).

NADP(+) contacts are provided by residues 165–167 (GRS), Ser-190, and Thr-231.

It belongs to the tetrahydrofolate dehydrogenase/cyclohydrolase family. As to quaternary structure, homodimer.

The catalysed reaction is (6R)-5,10-methylene-5,6,7,8-tetrahydrofolate + NADP(+) = (6R)-5,10-methenyltetrahydrofolate + NADPH. It catalyses the reaction (6R)-5,10-methenyltetrahydrofolate + H2O = (6R)-10-formyltetrahydrofolate + H(+). It functions in the pathway one-carbon metabolism; tetrahydrofolate interconversion. Catalyzes the oxidation of 5,10-methylenetetrahydrofolate to 5,10-methenyltetrahydrofolate and then the hydrolysis of 5,10-methenyltetrahydrofolate to 10-formyltetrahydrofolate. This chain is Bifunctional protein FolD, found in Clostridium beijerinckii (strain ATCC 51743 / NCIMB 8052) (Clostridium acetobutylicum).